We begin with the raw amino-acid sequence, 116 residues long: HTH-type transcriptional regulator AnsR (116 aa).

The HTH cro/C1-type domain occupies 6-60; that stretch reads LTELRKKKNWSLQYTADLLGIAKSTYAGYESGYRRPSLEALAMLADLFDTTCDEL. Residues 17–36 constitute a DNA-binding region (H-T-H motif); that stretch reads LQYTADLLGIAKSTYAGYES.

Its function is as follows. Transcriptional repressor for the ans operon coding for L-asparaginase and L-aspartase. NH4(+) may influence this repression. The sequence is that of HTH-type transcriptional regulator AnsR (ansR) from Bacillus subtilis (strain 168).